A 383-amino-acid polypeptide reads, in one-letter code: Mannan endo-1,4-beta-mannosidase A (383 aa).

The first 18 residues, 1-18 (MKFSQALLSLASLALAAA), serve as a signal peptide directing secretion. N75 carries an N-linked (GlcNAc...) asparagine glycan. W97 serves as a coordination point for substrate. An N-linked (GlcNAc...) asparagine glycan is attached at N199. Residues N210 and 211–213 (EPR) each bind substrate. E211 acts as the Proton donor/acceptor in catalysis. Residues C214 and C217 are joined by a disulfide bond. Substrate is bound by residues Y279 and W283. The cysteines at positions 301 and 308 are disulfide-linked. The active-site Nucleophile is the E312. A disulfide bond links C320 and C369. N-linked (GlcNAc...) asparagine glycosylation is present at N332. Residue W342 participates in substrate binding.

This sequence belongs to the glycosyl hydrolase 5 (cellulase A) family. As to quaternary structure, monomer.

Its subcellular location is the secreted. The enzyme catalyses Random hydrolysis of (1-&gt;4)-beta-D-mannosidic linkages in mannans, galactomannans and glucomannans.. Endo-1,4-mannanase that catalyzes the random hydrolysis of (1-&gt;4)-beta-D-mannosidic linkages in mannans and heteromannans. It is a crucial enzyme for depolymerization of seed galactomannans and wood galactoglucomannans. Active against locust bean gum and gum guar. Also has transglycosylation activity. In Emericella nidulans (strain FGSC A4 / ATCC 38163 / CBS 112.46 / NRRL 194 / M139) (Aspergillus nidulans), this protein is Mannan endo-1,4-beta-mannosidase A (manA).